The following is a 687-amino-acid chain: Polyphosphate kinase (687 aa).

N45 provides a ligand contact to ATP. Positions 375 and 405 each coordinate Mg(2+). H435 functions as the Phosphohistidine intermediate in the catalytic mechanism. 3 residues coordinate ATP: Y472, R568, and H596.

Belongs to the polyphosphate kinase 1 (PPK1) family. Mg(2+) is required as a cofactor. Post-translationally, an intermediate of this reaction is the autophosphorylated ppk in which a phosphate is covalently linked to a histidine residue through a N-P bond.

It carries out the reaction [phosphate](n) + ATP = [phosphate](n+1) + ADP. Its function is as follows. Catalyzes the reversible transfer of the terminal phosphate of ATP to form a long-chain polyphosphate (polyP). This Burkholderia vietnamiensis (strain G4 / LMG 22486) (Burkholderia cepacia (strain R1808)) protein is Polyphosphate kinase.